An 875-amino-acid polypeptide reads, in one-letter code: Valine--tRNA ligase (875 aa).

A 'HIGH' region motif is present at residues 43–53 (PNVTGVLHMGH). A 'KMSKS' region motif is present at residues 534-538 (KMSKS). K537 lines the ATP pocket. Positions 805–875 (GNLINTEEEL…LKESIAALKK (71 aa)) form a coiled coil.

It belongs to the class-I aminoacyl-tRNA synthetase family. ValS type 1 subfamily. Monomer.

The protein resides in the cytoplasm. The catalysed reaction is tRNA(Val) + L-valine + ATP = L-valyl-tRNA(Val) + AMP + diphosphate. Functionally, catalyzes the attachment of valine to tRNA(Val). As ValRS can inadvertently accommodate and process structurally similar amino acids such as threonine, to avoid such errors, it has a 'posttransfer' editing activity that hydrolyzes mischarged Thr-tRNA(Val) in a tRNA-dependent manner. This is Valine--tRNA ligase from Phocaeicola vulgatus (strain ATCC 8482 / DSM 1447 / JCM 5826 / CCUG 4940 / NBRC 14291 / NCTC 11154) (Bacteroides vulgatus).